A 386-amino-acid polypeptide reads, in one-letter code: Succinate--CoA ligase [ADP-forming] subunit beta (386 aa).

ATP-binding residues include Lys46, Glu99, Ala102, and Glu107. Mg(2+) is bound by residues Asn199 and Asp213. Substrate-binding positions include Asn264 and 321–323 (GIM).

This sequence belongs to the succinate/malate CoA ligase beta subunit family. As to quaternary structure, heterotetramer of two alpha and two beta subunits. Requires Mg(2+) as cofactor.

It carries out the reaction succinate + ATP + CoA = succinyl-CoA + ADP + phosphate. The catalysed reaction is GTP + succinate + CoA = succinyl-CoA + GDP + phosphate. It participates in carbohydrate metabolism; tricarboxylic acid cycle; succinate from succinyl-CoA (ligase route): step 1/1. Functionally, succinyl-CoA synthetase functions in the citric acid cycle (TCA), coupling the hydrolysis of succinyl-CoA to the synthesis of either ATP or GTP and thus represents the only step of substrate-level phosphorylation in the TCA. The beta subunit provides nucleotide specificity of the enzyme and binds the substrate succinate, while the binding sites for coenzyme A and phosphate are found in the alpha subunit. In Orientia tsutsugamushi (strain Boryong) (Rickettsia tsutsugamushi), this protein is Succinate--CoA ligase [ADP-forming] subunit beta.